The sequence spans 78 residues: Small ribosomal subunit protein bS16c (78 aa).

The protein belongs to the bacterial ribosomal protein bS16 family.

It localises to the plastid. Its subcellular location is the chloroplast. The polypeptide is Small ribosomal subunit protein bS16c (Phaeodactylum tricornutum (strain CCAP 1055/1)).